The primary structure comprises 233 residues: uncharacterized protein (233 aa).

A run of 6 helical transmembrane segments spans residues 7–27 (VPIF…LLAY), 36–56 (YEFE…ILIP), 62–82 (MFVL…KYLA), 119–139 (LIIA…AILM), 159–179 (PLYP…VGLV), and 188–208 (ILLA…APHI).

The protein resides in the cell membrane. This is an uncharacterized protein from Methanocaldococcus jannaschii (strain ATCC 43067 / DSM 2661 / JAL-1 / JCM 10045 / NBRC 100440) (Methanococcus jannaschii).